The chain runs to 177 residues: SsrA-binding protein (177 aa).

2 disordered regions span residues 1–23 (MYVP…KDGK) and 148–177 (YDKR…QRGE). The segment covering 148 to 165 (YDKRQTLREKQDRRESDR) has biased composition (basic and acidic residues).

The protein belongs to the SmpB family.

The protein resides in the cytoplasm. Functionally, required for rescue of stalled ribosomes mediated by trans-translation. Binds to transfer-messenger RNA (tmRNA), required for stable association of tmRNA with ribosomes. tmRNA and SmpB together mimic tRNA shape, replacing the anticodon stem-loop with SmpB. tmRNA is encoded by the ssrA gene; the 2 termini fold to resemble tRNA(Ala) and it encodes a 'tag peptide', a short internal open reading frame. During trans-translation Ala-aminoacylated tmRNA acts like a tRNA, entering the A-site of stalled ribosomes, displacing the stalled mRNA. The ribosome then switches to translate the ORF on the tmRNA; the nascent peptide is terminated with the 'tag peptide' encoded by the tmRNA and targeted for degradation. The ribosome is freed to recommence translation, which seems to be the essential function of trans-translation. The polypeptide is SsrA-binding protein (Streptomyces avermitilis (strain ATCC 31267 / DSM 46492 / JCM 5070 / NBRC 14893 / NCIMB 12804 / NRRL 8165 / MA-4680)).